The chain runs to 323 residues: MIDFGNFYSLIAKNHLSHWLETLPAQIASWQREQQHGLFKQWSNAVEFLPEIKPYRLDLLHSVTAESEEPLSAGQIKRIETLMRNLMPWRKGPFSLYGVNIDTEWRSDWKWDRVLPHLSDLTGRTILDVGCGSGYHMWRMIGAGAHLAVGIDPTQLFLCQFEAVRKLLGNDQRAHLLPLGIEQLPALKAFDTVFSMGVLYHRRSPLEHLWQLKDQLVNEGELVLETLIIDGDENTVLVPGDRYAQMRNVYFIPSALALKNWLKKCGFVDIRIADVSVTTTEEQRRTEWMVTESLSDFLDPHDPGKTVEGYPAPKRAVLIARKP.

Carboxy-S-adenosyl-L-methionine is bound by residues K91, W105, K110, G130, 152-154 (DPT), 181-182 (IE), M196, Y200, and R315.

Belongs to the class I-like SAM-binding methyltransferase superfamily. CmoB family. Homotetramer.

It catalyses the reaction carboxy-S-adenosyl-L-methionine + 5-hydroxyuridine(34) in tRNA = 5-carboxymethoxyuridine(34) in tRNA + S-adenosyl-L-homocysteine + H(+). Its function is as follows. Catalyzes carboxymethyl transfer from carboxy-S-adenosyl-L-methionine (Cx-SAM) to 5-hydroxyuridine (ho5U) to form 5-carboxymethoxyuridine (cmo5U) at position 34 in tRNAs. This is tRNA U34 carboxymethyltransferase from Escherichia fergusonii (strain ATCC 35469 / DSM 13698 / CCUG 18766 / IAM 14443 / JCM 21226 / LMG 7866 / NBRC 102419 / NCTC 12128 / CDC 0568-73).